The primary structure comprises 698 residues: Polyphosphate kinase 1 (698 aa).

ATP is bound at residue Asn46. Residues Arg377 and Arg407 each coordinate Mg(2+). His437 acts as the Phosphohistidine intermediate in catalysis. Residues Tyr470, Arg566, and His594 each contribute to the ATP site.

Belongs to the polyphosphate kinase 1 (PPK1) family. It depends on Mg(2+) as a cofactor. In terms of processing, an intermediate of this reaction is the autophosphorylated ppk in which a phosphate is covalently linked to a histidine residue through a N-P bond.

It catalyses the reaction [phosphate](n) + ATP = [phosphate](n+1) + ADP. In terms of biological role, catalyzes the reversible transfer of the terminal phosphate of ATP to form a long-chain polyphosphate (polyP). This Chlorobaculum tepidum (strain ATCC 49652 / DSM 12025 / NBRC 103806 / TLS) (Chlorobium tepidum) protein is Polyphosphate kinase 1.